A 321-amino-acid chain; its full sequence is Lipoyl synthase (321 aa).

[4Fe-4S] cluster-binding residues include Cys68, Cys73, Cys79, Cys94, Cys98, Cys101, and Ser308. A Radical SAM core domain is found at 80–297 (FNHGTATFMI…KALADELGFT (218 aa)).

It belongs to the radical SAM superfamily. Lipoyl synthase family. Requires [4Fe-4S] cluster as cofactor.

It localises to the cytoplasm. It catalyses the reaction [[Fe-S] cluster scaffold protein carrying a second [4Fe-4S](2+) cluster] + N(6)-octanoyl-L-lysyl-[protein] + 2 oxidized [2Fe-2S]-[ferredoxin] + 2 S-adenosyl-L-methionine + 4 H(+) = [[Fe-S] cluster scaffold protein] + N(6)-[(R)-dihydrolipoyl]-L-lysyl-[protein] + 4 Fe(3+) + 2 hydrogen sulfide + 2 5'-deoxyadenosine + 2 L-methionine + 2 reduced [2Fe-2S]-[ferredoxin]. It participates in protein modification; protein lipoylation via endogenous pathway; protein N(6)-(lipoyl)lysine from octanoyl-[acyl-carrier-protein]: step 2/2. Functionally, catalyzes the radical-mediated insertion of two sulfur atoms into the C-6 and C-8 positions of the octanoyl moiety bound to the lipoyl domains of lipoate-dependent enzymes, thereby converting the octanoylated domains into lipoylated derivatives. The sequence is that of Lipoyl synthase from Shewanella baltica (strain OS185).